Here is a 746-residue protein sequence, read N- to C-terminus: Exostosin-1 (746 aa).

The Cytoplasmic portion of the chain corresponds to 1–7 (MQAKKRY). The helical; Signal-anchor for type II membrane protein transmembrane segment at 8-28 (FILLSAGSCLALLFYFGGLQF) threads the bilayer. Residues 29-746 (RASRSHSRRE…RKKYRDIERL (718 aa)) are Lumenal-facing. N89 is a glycosylation site (N-linked (GlcNAc...) asparagine). Intrachain disulfides connect C98–C103 and C109–C152. A protein is bound by residues L166 and Y203. UDP contacts are provided by K267, K269, Y271, and R280. The cysteines at positions 298 and 312 are disulfide-linked. H300 is a binding site for a protein. UDP contacts are provided by Y319 and Y324. N330 carries N-linked (GlcNAc...) asparagine glycosylation. 2 disulfide bridges follow: C334-C355 and C652-C704. R346 and E349 together coordinate UDP.

Belongs to the glycosyltransferase 47 family. As to quaternary structure, part of the heparan sulfate polymerase, a dimeric complex composed of EXT1 and EXT2. Could also form homooligomeric complexes. Interacts with NDST1. Post-translationally, N-glycosylated.

The protein resides in the golgi apparatus membrane. Its subcellular location is the golgi apparatus. It is found in the cis-Golgi network membrane. It localises to the endoplasmic reticulum membrane. The enzyme catalyses 3-O-{alpha-D-GlcNAc-[(1-&gt;4)-beta-D-GlcA-(1-&gt;4)-alpha-D-GlcNAc](n)-(1-&gt;4)-beta-D-GlcA-(1-&gt;3)-beta-D-Gal-(1-&gt;3)-beta-D-Gal-(1-&gt;4)-beta-D-Xyl}-L-seryl-[protein] + UDP-alpha-D-glucuronate = 3-O-{[(1-&gt;4)-beta-D-GlcA-(1-&gt;4)-alpha-D-GlcNAc](n+1)-(1-&gt;4)-beta-D-GlcA-(1-&gt;3)-beta-D-Gal-(1-&gt;3)-beta-D-Gal-(1-&gt;4)-beta-D-Xyl}-L-seryl-[protein] + UDP + H(+). The protein operates within protein modification; protein glycosylation. In terms of biological role, glycosyltransferase forming with EXT2 the heterodimeric heparan sulfate polymerase which catalyzes the elongation of the heparan sulfate glycan backbone. Glycan backbone extension consists in the alternating transfer of (1-&gt;4)-beta-D-GlcA and (1-&gt;4)-alpha-D-GlcNAc residues from their respective UDP-sugar donors. Both EXT1 and EXT2 are required for the full activity of the polymerase since EXT1 bears the N-acetylglucosaminyl-proteoglycan 4-beta-glucuronosyltransferase activity within the complex while EXT2 carries the glucuronosyl-N-acetylglucosaminyl-proteoglycan 4-alpha-N-acetylglucosaminyltransferase activity. Heparan sulfate proteoglycans are ubiquitous components of the extracellular matrix and play an important role in tissue homeostasis and signaling. The sequence is that of Exostosin-1 (EXT1) from Papio anubis (Olive baboon).